Reading from the N-terminus, the 542-residue chain is MSASSRFIPEHRRQNYKGKGTFQADELRRRRETQQIEIRKQKREENLNKRRNLVDVQEPAEETIPLEQDKENDLELELQLPDLLKALYSDDIEAQIQATAKFRKALSKETNPPIQKVIDAGVVPRFVEFLSHENNLLKFEASWALTNVASGSSNQTHVVVEANAVPVFVSLLSSSEQDVREQAVWALGNIAGDSPMCRDHVLQCGVLEPLLNIIESNRRLSMLRNSTWTLSNMCRGKNPQPDWNSISQVIPVLSKLIYTLDEDVLVDALWAISYLSDGANEKIQAIIDAGIPRRLVELLMHPSAQVQTPALRSVGNIVTGDDVQTQVIINCGALSALLSLLSSPRDGVRKEACWTISNITAGNSSQIQYVIEANIIPPLIHLLTTADFKIQKEACWAISNATSGGARRPDQIRYLVEQGAIKPLCNLLACQDNKIIQVALDGIENILRVGELDRANNPDKINLYAVYVEDAGGMDLIHECQNSSNSEIYQKAYNIIEKFFGEEDEIEELEPETVGDTFTFGTTQEPAGDFQFSATNAEDMAM.

The tract at residues 1-29 (MSASSRFIPEHRRQNYKGKGTFQADELRR) is disordered. Residues 1-60 (MSASSRFIPEHRRQNYKGKGTFQADELRRRRETQQIEIRKQKREENLNKRRNLVDVQEPA) form the IBB domain. ARM repeat units lie at residues 114–155 (IQKV…SSNQ), 156–197 (THVV…SPMC), 198–240 (RDHV…KNPQ), 241–282 (PDWN…ANEK), 283–324 (IQAI…DDVQ), 325–366 (TQVI…NSSQ), 367–408 (IQYV…GARR), and 409–453 (PDQI…GELD).

The protein belongs to the importin alpha family. Interacts with pap1.

The protein resides in the nucleus. Binds specifically and directly to substrates containing either a simple or bipartite NLS motif. Promotes docking of import substrates to the nuclear envelope. Seems to act as a cytosolic receptor for both simple and bipartite NLS motifs. Has an essential role in mitotic chromosome condensation. Involved in nuclear protein import. Required for efficient nuclear import of both an SV40 nuclear localization signal-containing reporter protein and the pap1 component of the stress response MAP kinase pathway. Required for proper mitotic progression. This chain is Importin subunit alpha-1 (cut15), found in Schizosaccharomyces pombe (strain 972 / ATCC 24843) (Fission yeast).